The chain runs to 240 residues: Uridylate kinase (240 aa).

13–16 (KASG) contacts ATP. Residues 21 to 26 (GSQGFG) are involved in allosteric activation by GTP. Residue Gly-55 coordinates UMP. The ATP site is built by Gly-56 and Arg-60. UMP is bound by residues Asp-75 and 136–143 (TGNPFFTT). Residues Thr-163, Gln-164, Tyr-169, and Asp-172 each coordinate ATP.

Belongs to the UMP kinase family. In terms of assembly, homohexamer.

It is found in the cytoplasm. The enzyme catalyses UMP + ATP = UDP + ADP. The protein operates within pyrimidine metabolism; CTP biosynthesis via de novo pathway; UDP from UMP (UMPK route): step 1/1. Its activity is regulated as follows. Allosterically activated by GTP. Inhibited by UTP. Catalyzes the reversible phosphorylation of UMP to UDP. The sequence is that of Uridylate kinase from Brucella melitensis biotype 1 (strain ATCC 23456 / CCUG 17765 / NCTC 10094 / 16M).